The chain runs to 151 residues: Deoxyuridine 5'-triphosphate nucleotidohydrolase (151 aa).

Substrate-binding positions include 70 to 72, asparagine 83, 87 to 89, and methionine 97; these read RSG and LID.

This sequence belongs to the dUTPase family. Requires Mg(2+) as cofactor.

It catalyses the reaction dUTP + H2O = dUMP + diphosphate + H(+). The protein operates within pyrimidine metabolism; dUMP biosynthesis; dUMP from dCTP (dUTP route): step 2/2. In terms of biological role, this enzyme is involved in nucleotide metabolism: it produces dUMP, the immediate precursor of thymidine nucleotides and it decreases the intracellular concentration of dUTP so that uracil cannot be incorporated into DNA. The protein is Deoxyuridine 5'-triphosphate nucleotidohydrolase of Mannheimia succiniciproducens (strain KCTC 0769BP / MBEL55E).